The chain runs to 321 residues: Glucokinase (321 aa).

An ATP-binding site is contributed by 8–13; that stretch reads GDVGGT.

The protein belongs to the bacterial glucokinase family.

Its subcellular location is the cytoplasm. The catalysed reaction is D-glucose + ATP = D-glucose 6-phosphate + ADP + H(+). The sequence is that of Glucokinase from Shigella flexneri serotype 5b (strain 8401).